The sequence spans 444 residues: Xaa-Pro dipeptidase (444 aa).

Positions 247, 258, 340, 385, and 424 each coordinate Mn(2+).

This sequence belongs to the peptidase M24B family. Bacterial-type prolidase subfamily. It depends on Mn(2+) as a cofactor.

The catalysed reaction is Xaa-L-Pro dipeptide + H2O = an L-alpha-amino acid + L-proline. Its function is as follows. Splits dipeptides with a prolyl residue in the C-terminal position. The chain is Xaa-Pro dipeptidase from Photorhabdus laumondii subsp. laumondii (strain DSM 15139 / CIP 105565 / TT01) (Photorhabdus luminescens subsp. laumondii).